Here is a 1349-residue protein sequence, read N- to C-terminus: Periaxin (1349 aa).

Ser-7 is modified (phosphoserine). Residues Leu-16–Thr-99 form the PDZ domain. The short motif at Val-70–Leu-84 is the Nuclear export signal element. Residue Ser-133 is modified to Phosphoserine. 41 consecutive repeat copies span residues Pro-402–Lys-406, Gly-410–Lys-414, Val-418–Lys-422, Met-426–Val-430, Leu-431–Arg-435, Leu-436–Glu-440, Val-444–Lys-448, Val-452–Ala-456, Val-457–Arg-461, Leu-462–Gln-466, Leu-467–Pro-471, Glu-472–Pro-476, Glu-477–Pro-481, Glu-485–Pro-489, Leu-493–Gln-497, Val-501–Lys-505, Leu-506–Lys-510, Val-514–Ala-518, Val-519–Arg-523, Leu-524–Gln-528, Val-532–Lys-536, Leu-537–Lys-549, Val-553–Ala-557, Val-558–Arg-562, Leu-563–Gln-567, Val-571–Lys-575, Leu-576–Lys-580, Val-589–Ala-593, Val-594–His-598, Leu-599–Gln-603, Val-612–Lys-616, Leu-617–Lys-621, Leu-622–Lys-626, Val-630–Val-634, Val-635–His-639, Val-643–Lys-647, Val-648–Arg-652, Leu-653–Gln-657, Val-661–His-665, Ala-669–Lys-673, and Leu-674–Pro-678. Residues Pro-402–Pro-678 form a 41 X 5 AA approximate tandem repeats of [LVMGIE]-[PSM]-[EDKA]-[LIVMA]-[AQKHPRT]; that may have a tripeptide spacer of [ALKD]-[IPV]-[KPH] region. Phosphoserine occurs at positions 794 and 974. The segment covering Ala-1207–Lys-1218 has biased composition (basic and acidic residues). A disordered region spans residues Ala-1207–Ile-1349. A compositionally biased stretch (low complexity) spans Ser-1232–Ser-1242. Phosphoserine occurs at positions 1236, 1240, 1242, 1289, 1295, and 1327.

The protein belongs to the periaxin family. As to quaternary structure, homodimer (via PDZ domain). Interacts with SCN10A. Found in a complex with SCN10A. Interacts with DRP2. Identified in a dystroglycan complex that contains at least PRX, DRP2, UTRN, DMD and DAG1. Detected in a complex composed of at least EZR, AHNAK, PPL and PRX. Identified in a complex with EZR, AHNAK, BFSP1, BFSP2, ANK2, PLEC, VIM and spectrin. Detected in eye lens (at protein level).

Its subcellular location is the nucleus. It is found in the cytoplasm. The protein localises to the cell membrane. The protein resides in the cell junction. It localises to the adherens junction. Functionally, scaffolding protein that functions as part of a dystroglycan complex in Schwann cells, and as part of EZR and AHNAK-containing complexes in eye lens fiber cells. Required for the maintenance of the peripheral myelin sheath that is essential for normal transmission of nerve impulses and normal perception of sensory stimuli. Required for normal transport of MBP mRNA from the perinuclear to the paranodal regions. Required for normal remyelination after nerve injury. Required for normal elongation of Schwann cells and normal length of the internodes between the nodes of Ranvier. The demyelinated nodes of Ranvier permit saltatory transmission of nerve impulses; shorter internodes cause slower transmission of nerve impulses. Required for the formation of appositions between the abaxonal surface of the myelin sheath and the Schwann cell plasma membrane; the Schwann cell cytoplasm is restricted to regions between these appositions. Required for the formation of Cajal bands and of Schmidt-Lanterman incisures that correspond to short, cytoplasm-filled regions on myelinated nerves. Recruits DRP2 to the Schwann cell plasma membrane. Required for normal protein composition of the eye lens fiber cell plasma membrane and normal eye lens fiber cell morphology. This is Periaxin (PRX) from Bos taurus (Bovine).